We begin with the raw amino-acid sequence, 528 residues long: Na(+)/H(+) antiporter NhaB (528 aa).

The next 10 helical transmembrane spans lie at 11–31 (VNFL…FLVI), 67–87 (PGGL…SQVL), 98–118 (LLLI…LFVF), 140–160 (AFLS…AVGI), 240–260 (FFIR…LTCV), 311–331 (LVAG…SVII), 350–370 (EEAL…GVII), 391–411 (LVVF…VFVG), 449–469 (ATPN…APLI), and 476–496 (MVIM…VTIE).

The protein belongs to the NhaB Na(+)/H(+) (TC 2.A.34) antiporter family.

It localises to the cell inner membrane. The catalysed reaction is 2 Na(+)(in) + 3 H(+)(out) = 2 Na(+)(out) + 3 H(+)(in). Na(+)/H(+) antiporter that extrudes sodium in exchange for external protons. The sequence is that of Na(+)/H(+) antiporter NhaB from Shewanella denitrificans (strain OS217 / ATCC BAA-1090 / DSM 15013).